Consider the following 250-residue polypeptide: Isoprenyl transferase (250 aa).

D27 is an active-site residue. D27 contributes to the Mg(2+) binding site. Residues 28 to 31 (GNRR), W32, H48, and 76 to 78 (STE) contribute to the substrate site. The Proton acceptor role is filled by N79. Residues F80, R82, R199, and 205–207 (RVS) each bind substrate. E218 lines the Mg(2+) pocket.

This sequence belongs to the UPP synthase family. In terms of assembly, homodimer. It depends on Mg(2+) as a cofactor.

Its function is as follows. Catalyzes the condensation of isopentenyl diphosphate (IPP) with allylic pyrophosphates generating different type of terpenoids. The sequence is that of Isoprenyl transferase from Chlamydia abortus (strain DSM 27085 / S26/3) (Chlamydophila abortus).